Here is a 302-residue protein sequence, read N- to C-terminus: Probable alpha-L-glutamate ligase (302 aa).

The region spanning 104-287 is the ATP-grasp domain; the sequence is LQLLSRKGVG…VAGLLIKFIE (184 aa). ATP-binding positions include Lys-141, 178–179, Asp-187, and 211–213; these read EY and RSN. The Mg(2+) site is built by Asp-248, Glu-260, and Asn-262. Residues Asp-248, Glu-260, and Asn-262 each coordinate Mn(2+).

Belongs to the RimK family. Mg(2+) is required as a cofactor. Requires Mn(2+) as cofactor.

The protein is Probable alpha-L-glutamate ligase of Alcanivorax borkumensis (strain ATCC 700651 / DSM 11573 / NCIMB 13689 / SK2).